Consider the following 202-residue polypeptide: Crustacean calcium-binding protein 23 (202 aa).

The residue at position 1 (Ser-1) is an N-acetylserine. EF-hand domains lie at 33–68, 69–104, 105–140, and 148–185; these read SGLL…FGLD, LSDG…EMTE, PRKK…KTHP, and TEDE…LSKA. Ca(2+) contacts are provided by Asp-84, Glu-93, Asp-118, Asp-122, and Asp-129.

Monomer or disulfide-linked dimers. As to expression, striated muscle and brain.

In terms of biological role, possibly acts as a regulatory protein and not as a calcium buffer or transport protein. The polypeptide is Crustacean calcium-binding protein 23 (Faxonius limosus (Spinycheek crayfish)).